A 206-amino-acid polypeptide reads, in one-letter code: Large ribosomal subunit protein eL13z (206 aa).

The disordered stretch occupies residues 183–206 (ERTNKRHAGARAKRAADAEKEEKK). Basic residues predominate over residues 186-195 (NKRHAGARAK). The segment covering 196-206 (RAADAEKEEKK) has biased composition (basic and acidic residues).

This sequence belongs to the eukaryotic ribosomal protein eL13 family.

The chain is Large ribosomal subunit protein eL13z from Brassica napus (Rape).